The sequence spans 199 residues: Hematopoietic prostaglandin D synthase (199 aa).

Residues 2 to 79 (PNYKLTYFNL…YLARESGLAG (78 aa)) enclose the GST N-terminal domain. Glutathione-binding positions include Y8, R14, W39, 49–51 (GKV), and 63–64 (QS). In terms of domain architecture, GST C-terminal spans 81–199 (TPVEQALADA…WIQKRPKTAI (119 aa)).

The protein belongs to the GST superfamily. Sigma family. It depends on glutathione as a cofactor. As to expression, highly expressed in liver, kidney, small intestine and colon, moderately in pancreas, bone marrow, lung and ovary, and expressed at low levels in spleen, thymus, heart and brain. Not detected in oviduct or skin (at protein level). Expressed in liver.

The protein localises to the cytoplasm. The catalysed reaction is prostaglandin H2 = prostaglandin D2. The enzyme catalyses RX + glutathione = an S-substituted glutathione + a halide anion + H(+). It carries out the reaction 2-glyceryl-prostaglandin H2 = 2-glyceryl-prostaglandin D2. Functionally, bifunctional enzyme which catalyzes both the conversion of PGH2 to PGD2, a prostaglandin involved in smooth muscle contraction/relaxation and a potent inhibitor of platelet aggregation, and the conjugation of glutathione with a wide range of aryl halides, organic isothiocyanates and alpha,beta-unsaturated carbonyls. Also exhibits low glutathione-peroxidase activity towards cumene hydroperoxide and t-butyl hydroperoxide. This Gallus gallus (Chicken) protein is Hematopoietic prostaglandin D synthase (HPGDS).